The following is a 171-amino-acid chain: 3-hydroxydecanoyl-[acyl-carrier-protein] dehydratase (171 aa).

Residue histidine 70 is part of the active site.

The protein belongs to the thioester dehydratase family. FabA subfamily. Homodimer.

Its subcellular location is the cytoplasm. It carries out the reaction a (3R)-hydroxyacyl-[ACP] = a (2E)-enoyl-[ACP] + H2O. It catalyses the reaction (3R)-hydroxydecanoyl-[ACP] = (2E)-decenoyl-[ACP] + H2O. The enzyme catalyses (2E)-decenoyl-[ACP] = (3Z)-decenoyl-[ACP]. It functions in the pathway lipid metabolism; fatty acid biosynthesis. Necessary for the introduction of cis unsaturation into fatty acids. Catalyzes the dehydration of (3R)-3-hydroxydecanoyl-ACP to E-(2)-decenoyl-ACP and then its isomerization to Z-(3)-decenoyl-ACP. Can catalyze the dehydratase reaction for beta-hydroxyacyl-ACPs with saturated chain lengths up to 16:0, being most active on intermediate chain length. This is 3-hydroxydecanoyl-[acyl-carrier-protein] dehydratase from Shewanella pealeana (strain ATCC 700345 / ANG-SQ1).